A 197-amino-acid chain; its full sequence is Imidazoleglycerol-phosphate dehydratase (197 aa).

Belongs to the imidazoleglycerol-phosphate dehydratase family.

It is found in the cytoplasm. It carries out the reaction D-erythro-1-(imidazol-4-yl)glycerol 3-phosphate = 3-(imidazol-4-yl)-2-oxopropyl phosphate + H2O. The protein operates within amino-acid biosynthesis; L-histidine biosynthesis; L-histidine from 5-phospho-alpha-D-ribose 1-diphosphate: step 6/9. In Marinobacter nauticus (strain ATCC 700491 / DSM 11845 / VT8) (Marinobacter aquaeolei), this protein is Imidazoleglycerol-phosphate dehydratase.